We begin with the raw amino-acid sequence, 270 residues long: MGNFILHPIQSRLIVISYSILILILPLYALFSYASNASWSLILEKATDPIAVAAYTLTIKMALYTAIINTIFGFIIAWVLTRYNFSGKRIMDAIVDLPLALPTSVAGLALSTVFGRNGLFGHILDFYNYEIIYTKRGILLAMIFVSFPFSVRAIQPILKEINKEEEEAAWSLGSGPLETFKRFIFPIILPAILNGFTLTFSRSLSEFGSIVMVAGNLPLQDLVSSVLISQYLEQYDYIGACVISIIVLMLACSVLLFVQIIHSLVVVDSK.

Transmembrane regions (helical) follow at residues 13–33, 61–81, 94–114, 138–158, 180–200, 208–228, and 238–258; these read LIVI…LFSY, MALY…WVLT, IVDL…STVF, ILLA…QPIL, FKRF…TLTF, GSIV…SVLI, and IGAC…LLFV. The ABC transmembrane type-1 domain occupies 55 to 256; the sequence is YTLTIKMALY…VLMLACSVLL (202 aa).

The protein belongs to the binding-protein-dependent transport system permease family. CysTW subfamily.

It is found in the plastid membrane. In terms of biological role, part of the ABC transporter complex cysAWTP (TC 3.A.1.6.1) involved in sulfate/thiosulfate import. Probably responsible for the translocation of the substrate across the membrane. In Helicosporidium sp. subsp. Simulium jonesii (Green alga), this protein is Probable sulfate transport system permease protein cysT (cysT).